We begin with the raw amino-acid sequence, 293 residues long: Ribosomal protein L11 methyltransferase (293 aa).

S-adenosyl-L-methionine is bound by residues T145, G166, D188, and N230.

The protein belongs to the methyltransferase superfamily. PrmA family.

Its subcellular location is the cytoplasm. The catalysed reaction is L-lysyl-[protein] + 3 S-adenosyl-L-methionine = N(6),N(6),N(6)-trimethyl-L-lysyl-[protein] + 3 S-adenosyl-L-homocysteine + 3 H(+). Methylates ribosomal protein L11. This Shewanella sediminis (strain HAW-EB3) protein is Ribosomal protein L11 methyltransferase.